The following is a 349-amino-acid chain: MKTIQGQSATTALTMEVARVQAISSITKCMDTIPSEYIRSENEQPAATTLQGVVLEVPVIDISNVDDDEEKLVKEIVEASKEWGIFQVINHGIPDEVIENLQKVGKEFFEEVPQEEKELIAKKPGAQSLEGYGTSLQKEIEGKKGWVDHLFHKIWPPSAINYRYWPKNPPSYREANEEYAKWLRKVADGIFRSLSLGLGLEGHEMMEAAGSEDIVYMLKINYYPPCPRPDLALGVVAHTDMSYITLLVPNEVQVFKDGHWYDVNYIPNAIIVHIGDQVEILSNGKYKSVYHRTTVNKYKTRMSWPVFLEPSSEHEVGPIPNLINEANPPKFKTKKYKDYVYCKLNKLPQ.

A Fe2OG dioxygenase domain is found at 213 to 310; it reads DIVYMLKINY…RMSWPVFLEP (98 aa). The Fe cation site is built by His-238, Asp-240, and His-291.

Belongs to the iron/ascorbate-dependent oxidoreductase family. Fe cation serves as cofactor. It depends on L-ascorbate as a cofactor.

The protein resides in the cytoplasm. The enzyme catalyses a (2R,3R)-dihydroflavonol + 2-oxoglutarate + O2 = a flavonol + succinate + CO2 + H2O. It carries out the reaction a (2S)-flavan-4-one + 2-oxoglutarate + O2 = a (2R,3R)-dihydroflavonol + succinate + CO2. It functions in the pathway secondary metabolite biosynthesis; flavonoid biosynthesis. Its function is as follows. Catalyzes the formation of flavonols from dihydroflavonols. It can act on dihydrokaempferol to produce kaempferol, on dihydroquercetin to produce quercitin and on dihydromyricetin to produce myricetin. The chain is Flavonol synthase/flavanone 3-hydroxylase from Solanum tuberosum (Potato).